We begin with the raw amino-acid sequence, 248 residues long: 1-(5-phosphoribosyl)-5-[(5-phosphoribosylamino)methylideneamino] imidazole-4-carboxamide isomerase (248 aa).

Residue D8 is the Proton acceptor of the active site. D130 acts as the Proton donor in catalysis.

Belongs to the HisA/HisF family.

It localises to the cytoplasm. The catalysed reaction is 1-(5-phospho-beta-D-ribosyl)-5-[(5-phospho-beta-D-ribosylamino)methylideneamino]imidazole-4-carboxamide = 5-[(5-phospho-1-deoxy-D-ribulos-1-ylimino)methylamino]-1-(5-phospho-beta-D-ribosyl)imidazole-4-carboxamide. It functions in the pathway amino-acid biosynthesis; L-histidine biosynthesis; L-histidine from 5-phospho-alpha-D-ribose 1-diphosphate: step 4/9. The protein is 1-(5-phosphoribosyl)-5-[(5-phosphoribosylamino)methylideneamino] imidazole-4-carboxamide isomerase of Alkalilimnicola ehrlichii (strain ATCC BAA-1101 / DSM 17681 / MLHE-1).